Reading from the N-terminus, the 937-residue chain is Protein translocase subunit SecA (937 aa).

Residues Gln-86, 104–108 (GEGKT), and Asp-493 contribute to the ATP site. The segment at 868–889 (LERPSQPTKLAYSAPSEDGDAE) is disordered. Zn(2+) is bound by residues Cys-911, Cys-913, Cys-922, and His-923. Residues 915-937 (SGKKFKQCHGRPGGPTGLTARVS) form a disordered region.

Belongs to the SecA family. As to quaternary structure, monomer and homodimer. Part of the essential Sec protein translocation apparatus which comprises SecA, SecYEG and auxiliary proteins SecDF. Other proteins may also be involved. It depends on Zn(2+) as a cofactor.

It is found in the cell membrane. The protein resides in the cytoplasm. It carries out the reaction ATP + H2O + cellular proteinSide 1 = ADP + phosphate + cellular proteinSide 2.. Part of the Sec protein translocase complex. Interacts with the SecYEG preprotein conducting channel. Has a central role in coupling the hydrolysis of ATP to the transfer of proteins into and across the cell membrane, serving as an ATP-driven molecular motor driving the stepwise translocation of polypeptide chains across the membrane. The chain is Protein translocase subunit SecA from Nocardioides sp. (strain ATCC BAA-499 / JS614).